The sequence spans 117 residues: Large ribosomal subunit protein bL20 (117 aa).

This sequence belongs to the bacterial ribosomal protein bL20 family.

Functionally, binds directly to 23S ribosomal RNA and is necessary for the in vitro assembly process of the 50S ribosomal subunit. It is not involved in the protein synthesizing functions of that subunit. This chain is Large ribosomal subunit protein bL20, found in Pelotomaculum thermopropionicum (strain DSM 13744 / JCM 10971 / SI).